We begin with the raw amino-acid sequence, 647 residues long: Pumilio homolog 3 (647 aa).

Positions Met-1–Thr-10 are enriched in basic residues. Residues Met-1 to Arg-123 are disordered. Lys-33 is subject to N6-acetyllysine. Basic residues predominate over residues Pro-59 to Lys-68. Residues Ser-102–Arg-123 show a composition bias toward basic and acidic residues. The Nuclear localization signal signature appears at Lys-105–Lys-117. The region spanning Glu-142–Leu-509 is the PUM-HD domain. Pumilio repeat units lie at residues His-176–Ala-211, Lys-212–His-247, Ser-248–Gly-276, Pro-288–His-324, Ser-325–Thr-360, His-361–Gly-396, Gln-397–Asp-434, Lys-435–Asp-503, Lys-504–His-550, Pro-551–Ile-595, and Asn-596–Ser-635.

In terms of assembly, interacts with PARP1 (via catalytic domain). In the adult eye, expressed primarily in retinal ganglion cells and, to a lesser extent, in the pigmented cells.

The protein resides in the nucleus. It localises to the nucleolus. The protein localises to the nucleoplasm. It is found in the chromosome. In terms of biological role, inhibits the poly(ADP-ribosyl)ation activity of PARP1 and the degradation of PARP1 by CASP3 following genotoxic stress. Binds to double-stranded RNA or DNA without sequence specificity. Involved in development of the eye and of primordial germ cells. The chain is Pumilio homolog 3 from Mus musculus (Mouse).